An 841-amino-acid polypeptide reads, in one-letter code: Translation initiation factor IF-2 (841 aa).

Positions 94-255 (QRSPEEIEAE…RNAHGFQSPT (162 aa)) are disordered. A compositionally biased stretch (basic and acidic residues) spans 96–135 (SPEEIEAERKREMDERRAVENAARQKAEEEAKRRAEEDAR). Residues 136–175 (NQPAAGQPASAPAQPVAAAEPVREAPAAAAPAPASAAPSA) are compositionally biased toward low complexity. Basic and acidic residues-rich tracts occupy residues 176 to 217 (DARK…EKAP) and 225 to 234 (TTDEESDSFR). Positions 235–248 (RGGRGKGKLKKRNA) are enriched in basic residues. One can recognise a tr-type G domain in the interval 341 to 510 (SRAPVVTVMG…LLQAEVLELK (170 aa)). Positions 350 to 357 (GHVDHGKT) are G1. GTP is bound at residue 350–357 (GHVDHGKT). The segment at 375–379 (GITQH) is G2. The interval 396-399 (DTPG) is G3. GTP-binding positions include 396-400 (DTPGH) and 450-453 (NKID). A G4 region spans residues 450–453 (NKID). A G5 region spans residues 486-488 (SAK).

It belongs to the TRAFAC class translation factor GTPase superfamily. Classic translation factor GTPase family. IF-2 subfamily.

The protein resides in the cytoplasm. Functionally, one of the essential components for the initiation of protein synthesis. Protects formylmethionyl-tRNA from spontaneous hydrolysis and promotes its binding to the 30S ribosomal subunits. Also involved in the hydrolysis of GTP during the formation of the 70S ribosomal complex. This chain is Translation initiation factor IF-2, found in Pseudomonas syringae pv. tomato (strain ATCC BAA-871 / DC3000).